The following is a 242-amino-acid chain: Type III pantothenate kinase (242 aa).

6-13 provides a ligand contact to ATP; the sequence is DAGNTRIK. Residues Tyr90 and 97 to 100 each bind substrate; that span reads GADR. Asp99 functions as the Proton acceptor in the catalytic mechanism. An ATP-binding site is contributed by Thr122. Substrate is bound at residue Thr172.

Belongs to the type III pantothenate kinase family. As to quaternary structure, homodimer. NH4(+) is required as a cofactor. Requires K(+) as cofactor.

It is found in the cytoplasm. The enzyme catalyses (R)-pantothenate + ATP = (R)-4'-phosphopantothenate + ADP + H(+). The protein operates within cofactor biosynthesis; coenzyme A biosynthesis; CoA from (R)-pantothenate: step 1/5. Catalyzes the phosphorylation of pantothenate (Pan), the first step in CoA biosynthesis. This is Type III pantothenate kinase from Aromatoleum aromaticum (strain DSM 19018 / LMG 30748 / EbN1) (Azoarcus sp. (strain EbN1)).